Consider the following 183-residue polypeptide: Ribosome-recycling factor (183 aa).

It belongs to the RRF family.

It localises to the cytoplasm. Responsible for the release of ribosomes from messenger RNA at the termination of protein biosynthesis. May increase the efficiency of translation by recycling ribosomes from one round of translation to another. The chain is Ribosome-recycling factor from Christiangramia forsetii (strain DSM 17595 / CGMCC 1.15422 / KT0803) (Gramella forsetii).